We begin with the raw amino-acid sequence, 890 residues long: Tyrosine-protein kinase receptor TYRO3 (890 aa).

An N-terminal signal peptide occupies residues 1–40; the sequence is MALRRSMGRPGLPPLPLPPPPRLGLLLAALASLLLPESAA. Ig-like C2-type domains follow at residues 41 to 128 and 139 to 220; these read AGLK…TEIS and PFFT…ATVH. Over 41–429 the chain is Extracellular; it reads AGLKLMGAPV…QGPPHSRTSW (389 aa). N-linked (GlcNAc...) asparagine glycosylation occurs at asparagine 63. 2 disulfides stabilise this stretch: cysteine 64-cysteine 117 and cysteine 160-cysteine 203. N-linked (GlcNAc...) asparagine glycosylation is found at asparagine 191, asparagine 230, asparagine 240, asparagine 293, asparagine 366, and asparagine 380. Fibronectin type-III domains are found at residues 227-320 and 325-416; these read APFN…TKGL and APQN…SHDR. The helical transmembrane segment at 430-450 threads the bilayer; sequence VPVVLGVLTALVTAAALALIL. The Cytoplasmic segment spans residues 451–890; sequence LRKRRKETRF…QQGLLPHSSC (440 aa). Serine 466 is modified (phosphoserine). The Protein kinase domain maps to 518–790; it reads FTLGRMLGKG…CLRMELENIL (273 aa). ATP-binding positions include 524-532 and lysine 550; that span reads LGKGEFGSV. Aspartate 655 (proton acceptor) is an active-site residue. Tyrosine 681, tyrosine 685, tyrosine 686, and tyrosine 804 each carry phosphotyrosine; by autocatalysis. Disordered regions lie at residues 815–837 and 851–871; these read AGGS…GSGM and LTPG…ESPL. Phosphoserine occurs at positions 818 and 869.

Belongs to the protein kinase superfamily. Tyr protein kinase family. AXL/UFO subfamily. As to quaternary structure, monomer and homodimer. Interacts (via N-terminus) with extracellular ligands TULP1 and GAS6. Interacts with PIK3R1; this interaction increases PI3-kinase activity. Post-translationally, autophosphorylated. Abundant in the brain and lower levels in other tissues.

The protein resides in the cell membrane. The enzyme catalyses L-tyrosyl-[protein] + ATP = O-phospho-L-tyrosyl-[protein] + ADP + H(+). Its function is as follows. Receptor tyrosine kinase that transduces signals from the extracellular matrix into the cytoplasm by binding to several ligands including TULP1 or GAS6. Regulates many physiological processes including cell survival, migration and differentiation. Ligand binding at the cell surface induces dimerization and autophosphorylation of TYRO3 on its intracellular domain that provides docking sites for downstream signaling molecules. Following activation by ligand, interacts with PIK3R1 and thereby enhances PI3-kinase activity. Activates the AKT survival pathway, including nuclear translocation of NF-kappa-B and up-regulation of transcription of NF-kappa-B-regulated genes. TYRO3 signaling plays a role in various processes such as neuron protection from excitotoxic injury, platelet aggregation and cytoskeleton reorganization. Also plays an important role in inhibition of Toll-like receptors (TLRs)-mediated innate immune response by activating STAT1, which selectively induces production of suppressors of cytokine signaling SOCS1 and SOCS3. In terms of biological role, (Microbial infection) Acts as a receptor for lassa virus and lymphocytic choriomeningitis virus, possibly through GAS6 binding to phosphatidyl-serine at the surface of virion envelope. Functionally, (Microbial infection) Acts as a receptor for Ebolavirus, possibly through GAS6 binding to phosphatidyl-serine at the surface of virion envelope. This Homo sapiens (Human) protein is Tyrosine-protein kinase receptor TYRO3 (TYRO3).